Here is a 301-residue protein sequence, read N- to C-terminus: Probable alpha-L-glutamate ligase (301 aa).

The ATP-grasp domain maps to 104–287 (LQLLSRKGIG…IAGMIIEYIE (184 aa)). Residues K141, 178–179 (EY), D187, and 211–213 (RSN) each bind ATP. Mg(2+)-binding residues include D248, E260, and N262. Mn(2+) is bound by residues D248, E260, and N262.

The protein belongs to the RimK family. Mg(2+) is required as a cofactor. The cofactor is Mn(2+).

The protein is Probable alpha-L-glutamate ligase of Methanococcoides burtonii (strain DSM 6242 / NBRC 107633 / OCM 468 / ACE-M).